We begin with the raw amino-acid sequence, 512 residues long: Maturase K (512 aa).

The protein belongs to the intron maturase 2 family. MatK subfamily.

It localises to the plastid. The protein resides in the chloroplast. Functionally, usually encoded in the trnK tRNA gene intron. Probably assists in splicing its own and other chloroplast group II introns. This is Maturase K from Soldanella alpina (Alpine snowbell).